Here is a 229-residue protein sequence, read N- to C-terminus: 2,3-bisphosphoglycerate-dependent phosphoglycerate mutase (229 aa).

Substrate is bound by residues 8-15 (RHGESAWN), 21-22 (TG), Arg60, 87-90 (ERHY), Lys98, 114-115 (RR), and 183-184 (GN). Residue His9 is the Tele-phosphohistidine intermediate of the active site. Glu87 functions as the Proton donor/acceptor in the catalytic mechanism.

This sequence belongs to the phosphoglycerate mutase family. BPG-dependent PGAM subfamily. Homodimer.

The catalysed reaction is (2R)-2-phosphoglycerate = (2R)-3-phosphoglycerate. It participates in carbohydrate degradation; glycolysis; pyruvate from D-glyceraldehyde 3-phosphate: step 3/5. In terms of biological role, catalyzes the interconversion of 2-phosphoglycerate and 3-phosphoglycerate. In Polynucleobacter necessarius subsp. necessarius (strain STIR1), this protein is 2,3-bisphosphoglycerate-dependent phosphoglycerate mutase.